A 68-amino-acid chain; its full sequence is Protease A inhibitor 3 (68 aa).

Met1 carries the N-acetylmethionine modification. Polar residues predominate over residues 1-14; it reads MNTDQQKVSEIFQS. 2 disordered regions span residues 1 to 21 and 33 to 68; these read MNTDQQKVSEIFQSSKEKLQG and MASQDKDGKTTDADESEKHNYQEQYNKLKGAGHKKE. Residues 1 to 32 are inhibitory domain; that stretch reads MNTDQQKVSEIFQSSKEKLQGDAKVVSDAFKK. Residues 33-53 are compositionally biased toward basic and acidic residues; sequence MASQDKDGKTTDADESEKHNY.

It belongs to the protease inhibitor I34 family.

Functionally, specific and potent inhibitor for yeast aspartic protease A (yscA). The proteinase acts as a folding template stabilizing the helical conformation in the inhibitor, which results in the potent and specific blockage of the proteolytic activity. This chain is Protease A inhibitor 3 (PAI3), found in Saccharomyces cerevisiae (strain ATCC 204508 / S288c) (Baker's yeast).